The sequence spans 216 residues: Octanoyltransferase (216 aa).

A BPL/LPL catalytic domain is found at 33-216 (AATADELWIV…ANRLSTSLSR (184 aa)). Residues 72–79 (RGGEVTYH), 148–150 (ALG), and 162–164 (GVS) contribute to the substrate site. Cys180 serves as the catalytic Acyl-thioester intermediate.

Belongs to the LipB family.

It localises to the cytoplasm. The enzyme catalyses octanoyl-[ACP] + L-lysyl-[protein] = N(6)-octanoyl-L-lysyl-[protein] + holo-[ACP] + H(+). It participates in protein modification; protein lipoylation via endogenous pathway; protein N(6)-(lipoyl)lysine from octanoyl-[acyl-carrier-protein]: step 1/2. Its function is as follows. Catalyzes the transfer of endogenously produced octanoic acid from octanoyl-acyl-carrier-protein onto the lipoyl domains of lipoate-dependent enzymes. Lipoyl-ACP can also act as a substrate although octanoyl-ACP is likely to be the physiological substrate. This Janthinobacterium sp. (strain Marseille) (Minibacterium massiliensis) protein is Octanoyltransferase.